Reading from the N-terminus, the 131-residue chain is Profilin-1 (131 aa).

Residues C13 and C115 are joined by a disulfide bond. An Involved in PIP2 interaction motif is present at residues 81–97 (AVIRGKKGSGGITVKKT). T111 carries the post-translational modification Phosphothreonine.

This sequence belongs to the profilin family. In terms of assembly, multimer. Occurs in many kinds of cells as a complex with monomeric actin in a 1:1 ratio. In terms of processing, phosphorylated by MAP kinases. In terms of tissue distribution, pollen specific.

Its subcellular location is the cytoplasm. It localises to the cytoskeleton. In terms of biological role, binds to actin and affects the structure of the cytoskeleton. At high concentrations, profilin prevents the polymerization of actin, whereas it enhances it at low concentrations. By binding to PIP2, it inhibits the formation of IP3 and DG. The protein is Profilin-1 (PRO1) of Zea mays (Maize).